The following is a 966-amino-acid chain: Protein STICHEL-like 4 (966 aa).

Disordered stretches follow at residues 64-118 and 200-237; these read RSLR…DRSS and RDNAAGNESEMSIASNSVPRGEKYEGEEGGGGRDREQN. Residues 75-84 are compositionally biased toward basic and acidic residues; the sequence is LKEDHQDSRE. The segment covering 98–108 has biased composition (polar residues); the sequence is PIVSFGTSKVT. The span at 109–118 shows a compositional bias: basic and acidic residues; it reads PSDEKFDRSS. Polar residues predominate over residues 208–217; it reads SEMSIASNSV. Residues 219–236 show a composition bias toward basic and acidic residues; it reads RGEKYEGEEGGGGRDREQ. An ATP-binding site is contributed by 384-391; it reads GPNGTGKT. Zn(2+) is bound by residues C403, C412, C415, and C418. Residues 650–678 are a coiled coil; that stretch reads SKEDMEKLKQALKTLSESEKQLRVSNDKL. Over residues 706-717 the composition is skewed to polar residues; sequence FNHTPLTDSDPS. Residues 706–733 are disordered; the sequence is FNHTPLTDSDPSNHVVAGTRRDDSKQGF.

Belongs to the DnaX/STICHEL family.

The chain is Protein STICHEL-like 4 from Arabidopsis thaliana (Mouse-ear cress).